Here is a 551-residue protein sequence, read N- to C-terminus: Cytochrome bc1 complex cytochrome b subunit (551 aa).

The helical transmembrane segment at 44–64 threads the bilayer; the sequence is FLLGEIALYSFIVLLLTGVYL. His-113 and His-127 together coordinate heme. 3 helical membrane-spanning segments follow: residues 117–137, 145–165, and 188–208; these read ALMFTAAIMVHLARIFFTGAF, WVIGSLLLILAMFEGYFGYSM, and VIGTWLHWALFGGDFPGTILI. Heme is bound by residues His-215 and His-230. Helical transmembrane passes span 216–236, 265–285, 334–354, 380–400, and 417–437; these read ILLIPGVILALIGLHLALVWF, SGAFFAAIVGVLGLMGGFLQI, PVWVAVIMALVFVLLITYPFL, IGAMAITFYMVLTLAAMNDII, and IGMVILPLLVYFITYRWCIGL. The tract at residues 532–551 is disordered; the sequence is ALREHQDSIASSPNGERGKH.

It belongs to the cytochrome b family. In terms of assembly, the cytochrome bc1 complex is composed of a cytochrome b (QcrB), the Rieske iron-sulfur protein (QcrA) and a diheme cytochrome c (QcrC) subunit. Heme is required as a cofactor.

The protein localises to the cell membrane. The catalysed reaction is a quinol + 2 Fe(III)-[cytochrome c](out) = a quinone + 2 Fe(II)-[cytochrome c](out) + 2 H(+)(out). Cytochrome b subunit of the cytochrome bc1 complex, an essential component of the respiratory electron transport chain required for ATP synthesis. The bc1 complex catalyzes the oxidation of ubiquinol and the reduction of cytochrome c in the respiratory chain. The bc1 complex operates through a Q-cycle mechanism that couples electron transfer to generation of the proton gradient that drives ATP synthesis. The cytochrome b subunit contains two ubiquinol reactive sites: the oxidation (QP) site and the reduction (QN) site. The chain is Cytochrome bc1 complex cytochrome b subunit (qcrB) from Mycobacterium leprae (strain TN).